The sequence spans 138 residues: Putative pre-16S rRNA nuclease (138 aa).

The protein belongs to the YqgF nuclease family.

It is found in the cytoplasm. Functionally, could be a nuclease involved in processing of the 5'-end of pre-16S rRNA. This chain is Putative pre-16S rRNA nuclease, found in Clostridium beijerinckii (strain ATCC 51743 / NCIMB 8052) (Clostridium acetobutylicum).